Consider the following 334-residue polypeptide: Fructose-1,6-bisphosphatase class 1 2 (334 aa).

Positions 92, 114, 116, and 117 each coordinate Mg(2+). Substrate contacts are provided by residues 117–120, N208, and K274; that span reads DGSS. E280 is a Mg(2+) binding site.

This sequence belongs to the FBPase class 1 family. As to quaternary structure, homotetramer. Requires Mg(2+) as cofactor.

It is found in the cytoplasm. The catalysed reaction is beta-D-fructose 1,6-bisphosphate + H2O = beta-D-fructose 6-phosphate + phosphate. Its pathway is carbohydrate biosynthesis; gluconeogenesis. The sequence is that of Fructose-1,6-bisphosphatase class 1 2 from Albidiferax ferrireducens (strain ATCC BAA-621 / DSM 15236 / T118) (Rhodoferax ferrireducens).